The chain runs to 288 residues: Putative N-terminal acetyltransferase 2 (288 aa).

The tract at residues 68–90 (TEEKSSQFDENKSKSNNGKKNEP) is disordered.

Heterooligomeric.

The protein localises to the cytoplasm. Functionally, maybe involved in N-terminal acetylation of proteins. N-acetylation plays a role in normal eukaryotic translation and processing, protect against proteolytic degradation and protein turnover. The polypeptide is Putative N-terminal acetyltransferase 2 (NAT2) (Saccharomyces cerevisiae (strain ATCC 204508 / S288c) (Baker's yeast)).